The primary structure comprises 155 residues: Myosin light chain alkali (155 aa).

EF-hand domains follow at residues 7 to 41 and 80 to 115; these read REVENVEFVFEVMGSPGEGIDAFDLGDALRALNLN and GCYEDFIECLKLYDKEENGTMLLAELQHALLALGES.

Myosin is a hexamer of 2 heavy chains and 4 light chains.

The polypeptide is Myosin light chain alkali (Mlc1) (Drosophila virilis (Fruit fly)).